Consider the following 184-residue polypeptide: Probable chemoreceptor glutamine deamidase CheD (184 aa).

Belongs to the CheD family.

It catalyses the reaction L-glutaminyl-[protein] + H2O = L-glutamyl-[protein] + NH4(+). Its function is as follows. Probably deamidates glutamine residues to glutamate on methyl-accepting chemotaxis receptors (MCPs), playing an important role in chemotaxis. This chain is Probable chemoreceptor glutamine deamidase CheD, found in Rhizobium etli (strain CIAT 652).